The primary structure comprises 218 residues: Heart- and neural crest derivatives-expressed protein 1 (218 aa).

3 disordered regions span residues 1–23, 56–112, and 172–203; these read MNLVGSYAHHHHHHHHHHPHPAH, APDF…RTES, and ADGGRESKRKRELQQHEGFPPALGPGEKRIKG. Residues 8 to 21 show a composition bias toward basic residues; it reads AHHHHHHHHHHPHP. Residues 68–92 are compositionally biased toward low complexity; that stretch reads AAAAAASYGPDARPGQSPGRLEALG. The span at 95-107 shows a compositional bias: basic residues; it reads LGRRKGSGPKKER. Residues 97 to 149 form the bHLH domain; the sequence is RRKGSGPKKERRRTESINSAFAELRECIPNVPADTKLSKIKTLRLATSYIAYL. Thr-110 is modified (phosphothreonine; by PLK4). The residue at position 112 (Ser-112) is a Phosphoserine; by PLK4.

As to quaternary structure, efficient DNA binding requires dimerization with another bHLH protein. Forms homodimers and heterodimers with TCF3 gene products E12 and E47, HAND2 and HEY1, HEY2 and HEYL (hairy-related transcription factors). Interacts with MDFIC. Interacts with SOX15; the interaction enhances HAND1-induced differentiation of trophoblast giant cells. Post-translationally, phosphorylation by PLK4 disrupts the interaction with MDFIC and leads to translocation into the nucleoplasm, allowing dimerization and transcription factor activity.

The protein localises to the nucleus. It is found in the nucleoplasm. Its subcellular location is the nucleolus. Its function is as follows. Transcription factor that plays an essential role in both trophoblast giant cell differentiation and in cardiac morphogenesis. Binds the DNA sequence 5'-NRTCTG-3' (non-canonical E-box). Acts as a transcriptional repressor of SOX15. In the adult, could be required for ongoing expression of cardiac-specific genes. The polypeptide is Heart- and neural crest derivatives-expressed protein 1 (HAND1) (Bos taurus (Bovine)).